The following is a 134-amino-acid chain: Retinol-binding protein 2 (134 aa).

Positions 41 and 109 each coordinate all-trans-retinol.

Belongs to the calycin superfamily. Fatty-acid binding protein (FABP) family.

It is found in the cytoplasm. Functionally, intracellular transport of retinol. The protein is Retinol-binding protein 2 (RBP2) of Sus scrofa (Pig).